The chain runs to 50 residues: Protein PsbN (50 aa).

A helical transmembrane segment spans residues 14–34; it reads IAVTILAILLALTGFGLWSAF.

This sequence belongs to the PsbN family.

It is found in the cellular thylakoid membrane. In terms of biological role, may play a role in photosystem I and II biogenesis. The sequence is that of Protein PsbN from Prochlorococcus marinus (strain MIT 9215).